Here is a 49-residue protein sequence, read N- to C-terminus: Disintegrin echistatin-gamma (49 aa).

A Disintegrin domain is found at Asp-1 to Pro-47. Cystine bridges form between Cys-2–Cys-11, Cys-7–Cys-32, Cys-8–Cys-37, and Cys-20–Cys-39. A Cell attachment site motif is present at residues Arg-24–Asp-26.

It belongs to the venom metalloproteinase (M12B) family. P-II subfamily. P-IIa sub-subfamily. Monomer. Expressed by the venom gland.

It is found in the secreted. In terms of biological role, has antiplatelet activities on guinea pig, followed by human, rabbit and rat platelet-rich plasma. This chain is Disintegrin echistatin-gamma, found in Echis pyramidum leakeyi (Leakey's carpet viper).